A 180-amino-acid polypeptide reads, in one-letter code: NADH-quinone oxidoreductase subunit I (180 aa).

4Fe-4S ferredoxin-type domains follow at residues 50–80 (LTRD…LQKT) and 90–119 (EFFR…LTPD). [4Fe-4S] cluster is bound by residues Cys60, Cys63, Cys66, Cys70, Cys99, Cys102, Cys105, and Cys109.

The protein belongs to the complex I 23 kDa subunit family. As to quaternary structure, NDH-1 is composed of 13 different subunits. Subunits NuoA, H, J, K, L, M, N constitute the membrane sector of the complex. It depends on [4Fe-4S] cluster as a cofactor.

Its subcellular location is the cell inner membrane. It catalyses the reaction a quinone + NADH + 5 H(+)(in) = a quinol + NAD(+) + 4 H(+)(out). Its function is as follows. NDH-1 shuttles electrons from NADH, via FMN and iron-sulfur (Fe-S) centers, to quinones in the respiratory chain. The immediate electron acceptor for the enzyme in this species is believed to be ubiquinone. Couples the redox reaction to proton translocation (for every two electrons transferred, four hydrogen ions are translocated across the cytoplasmic membrane), and thus conserves the redox energy in a proton gradient. This is NADH-quinone oxidoreductase subunit I from Shigella dysenteriae serotype 1 (strain Sd197).